A 318-amino-acid polypeptide reads, in one-letter code: Holliday junction branch migration complex subunit RuvB (318 aa).

Positions 1-168 (MPENLEIRPS…FGYVAKIVDY (168 aa)) are large ATPase domain (RuvB-L). ATP-binding residues include I7, R8, G49, K52, T53, T54, R158, Y168, and R205. T53 lines the Mg(2+) pocket. Positions 169 to 239 (TLEDMIQIIR…IVNKTFDSIG (71 aa)) are small ATPAse domain (RuvB-S). The head domain (RuvB-H) stretch occupies residues 242–318 (NQGLSQINIE…RDYLLELKTN (77 aa)). R278, K297, and R302 together coordinate DNA.

It belongs to the RuvB family. Homohexamer. Forms an RuvA(8)-RuvB(12)-Holliday junction (HJ) complex. HJ DNA is sandwiched between 2 RuvA tetramers; dsDNA enters through RuvA and exits via RuvB. An RuvB hexamer assembles on each DNA strand where it exits the tetramer. Each RuvB hexamer is contacted by two RuvA subunits (via domain III) on 2 adjacent RuvB subunits; this complex drives branch migration. In the full resolvosome a probable DNA-RuvA(4)-RuvB(12)-RuvC(2) complex forms which resolves the HJ.

It is found in the cytoplasm. The enzyme catalyses ATP + H2O = ADP + phosphate + H(+). Functionally, the RuvA-RuvB-RuvC complex processes Holliday junction (HJ) DNA during genetic recombination and DNA repair, while the RuvA-RuvB complex plays an important role in the rescue of blocked DNA replication forks via replication fork reversal (RFR). RuvA specifically binds to HJ cruciform DNA, conferring on it an open structure. The RuvB hexamer acts as an ATP-dependent pump, pulling dsDNA into and through the RuvAB complex. RuvB forms 2 homohexamers on either side of HJ DNA bound by 1 or 2 RuvA tetramers; 4 subunits per hexamer contact DNA at a time. Coordinated motions by a converter formed by DNA-disengaged RuvB subunits stimulates ATP hydrolysis and nucleotide exchange. Immobilization of the converter enables RuvB to convert the ATP-contained energy into a lever motion, pulling 2 nucleotides of DNA out of the RuvA tetramer per ATP hydrolyzed, thus driving DNA branch migration. The RuvB motors rotate together with the DNA substrate, which together with the progressing nucleotide cycle form the mechanistic basis for DNA recombination by continuous HJ branch migration. Branch migration allows RuvC to scan DNA until it finds its consensus sequence, where it cleaves and resolves cruciform DNA. The sequence is that of Holliday junction branch migration complex subunit RuvB from Mesomycoplasma hyopneumoniae (strain 232) (Mycoplasma hyopneumoniae).